The primary structure comprises 85 residues: DNA-directed RNA polymerase subunit omega (85 aa).

This sequence belongs to the RNA polymerase subunit omega family. As to quaternary structure, the RNAP catalytic core consists of 2 alpha, 1 beta, 1 beta' and 1 omega subunit. When a sigma factor is associated with the core the holoenzyme is formed, which can initiate transcription.

The enzyme catalyses RNA(n) + a ribonucleoside 5'-triphosphate = RNA(n+1) + diphosphate. Promotes RNA polymerase assembly. Latches the N- and C-terminal regions of the beta' subunit thereby facilitating its interaction with the beta and alpha subunits. The sequence is that of DNA-directed RNA polymerase subunit omega from Tropheryma whipplei (strain TW08/27) (Whipple's bacillus).